The sequence spans 534 residues: Importin subunit alpha-1b (534 aa).

One can recognise an IBB domain in the interval 1 to 58 (MSLRPSERAEVRRSRYKVAVDADEGRRRREDNMVEIRKSRREESLLKKRRDGLPAAAA). ARM repeat units lie at residues 111 to 151 (SPPI…NIAS), 154 to 193 (SDNTKVVVESGAVPIFVKLLSSPSEDVREQAVWALGNVAG), 196 to 236 (PKCR…NFCR), 238 to 277 (KPQPNFEQVKPALSALQRLIHSQDEEVLTDACWALSYLSD), 280 to 319 (NDKIQAVIESGVFPRLVELLMHPSASVLIPALRTVGNIVT), 322 to 362 (DMQT…NITA), 365 to 404 (REQIQAVINANIIAPLVHLLQTAEFDIKKEAAWAISNATS), and 408 to 447 (HDQIKYLVAQGCIKPLCDLLVCPDPRIVTVCLEGLENILK). The interval 505–534 (DAMPSGDNAQNGFNFGNQQPNVPSGGFNFG) is disordered. Over residues 514–523 (QNGFNFGNQQ) the composition is skewed to low complexity.

This sequence belongs to the importin alpha family. As to quaternary structure, forms a complex with importin subunit beta-1. The whole complex, most stable and composed of importin alpha and importin beta, is referred to as PTAC or pore targeting complex. Highly expressed in root and weakly in callus, etiolated leaf and green leaf.

Its subcellular location is the cytoplasm. It is found in the perinuclear region. Functions in nuclear protein import. Binds specifically and directly to substrates containing either a simple or bipartite NLS motif. Promotes docking of import substrates to the nuclear envelope. In conjunction with importin beta-1, mediates the nuclear envelope docking, and the subsequent translocation into the nucleus of the constitutive morphogenetic 1 (COP1) protein containing bipartite NLS motif. The protein is Importin subunit alpha-1b of Oryza sativa subsp. japonica (Rice).